We begin with the raw amino-acid sequence, 278 residues long: Putative peptidase Cgl1093 (278 aa).

An N-terminal signal peptide occupies residues 1-32 (MSSASFTTKALSVLAALTAASAPLVAASPAHA). The 204-residue stretch at 33 to 236 (LANARNVTGS…HAEWIAYYTG (204 aa)) folds into the Peptidase S1 domain. Cys59 and Cys75 are oxidised to a cystine. Catalysis depends on charge relay system residues His74, Asp123, and Ser189.

This sequence belongs to the peptidase S1 family.

It localises to the secreted. The polypeptide is Putative peptidase Cgl1093 (Corynebacterium glutamicum (strain ATCC 13032 / DSM 20300 / JCM 1318 / BCRC 11384 / CCUG 27702 / LMG 3730 / NBRC 12168 / NCIMB 10025 / NRRL B-2784 / 534)).